The following is a 144-amino-acid chain: Large ribosomal subunit protein uL16 (144 aa).

It belongs to the universal ribosomal protein uL16 family. As to quaternary structure, part of the 50S ribosomal subunit.

Its function is as follows. Binds 23S rRNA and is also seen to make contacts with the A and possibly P site tRNAs. The sequence is that of Large ribosomal subunit protein uL16 from Bacillus licheniformis (strain ATCC 14580 / DSM 13 / JCM 2505 / CCUG 7422 / NBRC 12200 / NCIMB 9375 / NCTC 10341 / NRRL NRS-1264 / Gibson 46).